Reading from the N-terminus, the 375-residue chain is Alpha-2,8-sialyltransferase 8B (375 aa).

The Cytoplasmic portion of the chain corresponds to 1 to 6; it reads MQLQFR. The helical; Signal-anchor for type II membrane protein transmembrane segment at 7 to 23 threads the bilayer; that stretch reads SWMLAALTLLVVFLIFA. The Lumenal portion of the chain corresponds to 24–375; the sequence is DISEIEEEIG…LTVGQCDGAT (352 aa). N-linked (GlcNAc...) asparagine glycosylation is found at N60, N72, N89, and N134. Disulfide bonds link C157/C307 and C171/C371. Residues N162 and N185 each coordinate CMP-N-acetyl-beta-neuraminate. N-linked (GlcNAc...) asparagine glycosylation is found at N219 and N234. The CMP-N-acetyl-beta-neuraminate site is built by T294, T295, G296, W316, Y329, and H330. H346 serves as the catalytic Proton donor/acceptor.

It belongs to the glycosyltransferase 29 family. Post-translationally, autopolysialylated. Autopolysialylation is not a prerequisite for the polysialylation acitity, but enhances the polysialylation acitity. As to expression, highly expressed in fetal brain, kidney and heart and to a much lesser extent in adult heart and thymus.

The protein resides in the golgi apparatus membrane. It is found in the secreted. The protein localises to the cell membrane. It carries out the reaction [N-acetyl-alpha-D-neuraminosyl-(2-&gt;8)](n) + CMP-N-acetyl-beta-neuraminate = [N-acetyl-alpha-D-neuraminosyl-(2-&gt;8)](n+1) + CMP + H(+). The protein operates within protein modification; protein glycosylation. Catalyzes the transfer of a sialic acid from a CMP-linked sialic acid donor onto a terminal alpha-2,3-, alpha-2,6-, or alpha-2,8-linked sialic acid of an N-linked glycan acceptor through alpha-2,8-linkages. Therefore, participates in polysialic acid synthesis on various sialylated N-acetyllactosaminyl oligosaccharides (alpha-2,3-, alpha-2,6-, or alpha-2,8-linked sialic acid), including NCAM1, NCAM1 N-glycans, FETUB N-glycans, and to a lesser extent sialylparagloboside (SPG) and AHSG, which does not require the initial addition of an alpha 2,8-sialic acid. However, does not exhibit sialic acid-polymerase activity. Catalyzes polysialic acid synthesis in the hippocampal on NCAM1 and supports neurite outgrowth. ST8SIA2-mediated polysialylation influences on oligodendrocyte differentiation and may promote the integrity of myelin and axons. This is Alpha-2,8-sialyltransferase 8B from Homo sapiens (Human).